The following is a 323-amino-acid chain: Tyrosine--tRNA ligase (323 aa).

Tyr36 contributes to the L-tyrosine binding site. A 'HIGH' region motif is present at residues 41 to 49; sequence PSGEIHLGH. Tyr158, Gln162, Asp165, and Gln180 together coordinate L-tyrosine. Positions 214-218 match the 'KMSKS' region motif; it reads KMSSS. Ser217 is an ATP binding site.

Belongs to the class-I aminoacyl-tRNA synthetase family. TyrS type 3 subfamily. Homodimer.

The protein resides in the cytoplasm. It catalyses the reaction tRNA(Tyr) + L-tyrosine + ATP = L-tyrosyl-tRNA(Tyr) + AMP + diphosphate + H(+). Functionally, catalyzes the attachment of tyrosine to tRNA(Tyr) in a two-step reaction: tyrosine is first activated by ATP to form Tyr-AMP and then transferred to the acceptor end of tRNA(Tyr). This chain is Tyrosine--tRNA ligase, found in Archaeoglobus fulgidus (strain ATCC 49558 / DSM 4304 / JCM 9628 / NBRC 100126 / VC-16).